The chain runs to 336 residues: N-acetylornithine carbamoyltransferase (336 aa).

Carbamoyl phosphate contacts are provided by residues 49–52 (SMRT), tryptophan 77, and arginine 112. Glutamate 144 lines the N(2)-acetyl-L-ornithine pocket. 148–151 (HPCQ) contacts carbamoyl phosphate. 2 residues coordinate N(2)-acetyl-L-ornithine: lysine 252 and leucine 295. Position 294 to 295 (294 to 295 (CL)) interacts with carbamoyl phosphate. An N6-carboxylysine modification is found at lysine 302. Residue arginine 322 participates in carbamoyl phosphate binding.

The protein belongs to the aspartate/ornithine carbamoyltransferase superfamily. AOTCase family. As to quaternary structure, homotrimer.

The protein localises to the cytoplasm. It catalyses the reaction N(2)-acetyl-L-ornithine + carbamoyl phosphate = N(2)-acetyl-L-citrulline + phosphate + H(+). It functions in the pathway amino-acid biosynthesis; L-arginine biosynthesis. Carboxylation at Lys-302 increases the catalytic activity of the enzyme. Functionally, catalyzes the transfer of the carbamoyl group from carbamoyl phosphate to the delta-amino group of N(2)-acetyl-L-ornithine to produce N(2)-acetyl-L-citrulline. This is a step in an alternative arginine biosynthesis pathway. The enzyme has no activity with ornithine. The sequence is that of N-acetylornithine carbamoyltransferase from Xylella fastidiosa (strain Temecula1 / ATCC 700964).